A 585-amino-acid chain; its full sequence is MRSHYCTDLSKADIGKEVILCGWANTYRDHGGVVFIDLRDVSGLIQLVCDPADSKEAHDVAAKVRDEYVLKAKGKVRARGEGLTNPKLKTGEIEVIVSELIIENPSEPLPFMIGDESVNEDIRLKYRFLDLRSERLQNIFKMRSRAAIAARNSLDKMGFIEFETPVLTRATPEGARDYLVPSRVYPGQFYALPQSPQLFKQLLMCSGFDKYFQIAKCFRDEDLRADRQPEFTQIDIEMSFVEQEDIINMAETMLKDIFKACGHDIKTPFRRMSYKEATETYGSDKPDLRYDLKMIDVIDIFERSSNEIFSSIAKDKKKNRIKALKVPNGDNIFSKREMNRFEEFVRKFGAQGLGYFQMKEDGLKGPLCKFFEQSDLDEIVSRCELKVGDVVFFGAGKKKIVLDYMGRFRIFLAEQMGIIDQDRLEFLWVLDFPMFEQNDDGSYSAMHHPFTMPKNIDEPDLEDILSIAHDVVLNGFELGGGSIRIHKNDIQQKVFKLLGIDEAEQREKFGFLLDALTFGAPPHGGIAIGFDRLNMLVNKASSIRDVIAFPKTQRAQCPLTKAPSYASNEQLRELGLRIREKEQKA.

An L-aspartate-binding site is contributed by Glu173. The aspartate stretch occupies residues 197–200; it reads QLFK. Residue Arg219 coordinates L-aspartate. ATP is bound by residues 219-221 and Gln228; that span reads RDE. His447 is a binding site for L-aspartate. Glu477 lines the ATP pocket. Arg484 is a binding site for L-aspartate. Residue 529–532 participates in ATP binding; that stretch reads GFDR.

The protein belongs to the class-II aminoacyl-tRNA synthetase family. Type 1 subfamily. Homodimer.

The protein localises to the cytoplasm. It catalyses the reaction tRNA(Asx) + L-aspartate + ATP = L-aspartyl-tRNA(Asx) + AMP + diphosphate. Its function is as follows. Aspartyl-tRNA synthetase with relaxed tRNA specificity since it is able to aspartylate not only its cognate tRNA(Asp) but also tRNA(Asn). Reaction proceeds in two steps: L-aspartate is first activated by ATP to form Asp-AMP and then transferred to the acceptor end of tRNA(Asp/Asn). The sequence is that of Aspartate--tRNA(Asp/Asn) ligase from Campylobacter concisus (strain 13826).